The primary structure comprises 333 residues: Fructose-1,6-bisphosphatase class 1 (333 aa).

Residues Glu-90, Asp-113, Leu-115, and Asp-116 each contribute to the Mg(2+) site. Residues 116–119 (DGSS), Asn-209, Tyr-242, and Lys-272 contribute to the substrate site. Glu-278 is a binding site for Mg(2+).

It belongs to the FBPase class 1 family. As to quaternary structure, homotetramer. The cofactor is Mg(2+).

The protein localises to the cytoplasm. The enzyme catalyses beta-D-fructose 1,6-bisphosphate + H2O = beta-D-fructose 6-phosphate + phosphate. It functions in the pathway carbohydrate biosynthesis; gluconeogenesis. The polypeptide is Fructose-1,6-bisphosphatase class 1 (Pasteurella multocida (strain Pm70)).